The following is a 422-amino-acid chain: Glutamyl-tRNA reductase (422 aa).

Substrate contacts are provided by residues threonine 49–arginine 52, serine 108, glutamate 113–glutamine 115, and glutamine 119. Catalysis depends on cysteine 50, which acts as the Nucleophile. Residue glycine 188–isoleucine 193 participates in NADP(+) binding.

The protein belongs to the glutamyl-tRNA reductase family. As to quaternary structure, homodimer.

It carries out the reaction (S)-4-amino-5-oxopentanoate + tRNA(Glu) + NADP(+) = L-glutamyl-tRNA(Glu) + NADPH + H(+). The protein operates within porphyrin-containing compound metabolism; protoporphyrin-IX biosynthesis; 5-aminolevulinate from L-glutamyl-tRNA(Glu): step 1/2. Its function is as follows. Catalyzes the NADPH-dependent reduction of glutamyl-tRNA(Glu) to glutamate 1-semialdehyde (GSA). The polypeptide is Glutamyl-tRNA reductase (Marinomonas sp. (strain MWYL1)).